The primary structure comprises 141 residues: Hemoglobin subunit alpha-A (141 aa).

The region spanning Met-1–Arg-141 is the Globin domain. O2 is bound at residue His-58. His-87 contacts heme b.

It belongs to the globin family. As to quaternary structure, there are three forms of hemoglobin in Sphenodon: A, A' and D. Hb A is a tetramer of two alpha-A and two beta-1, Hb A' is a tetramer of two alpha-a and two beta-2, Hb D is a tetramer of two alpha-D and two beta-2. Red blood cells.

In terms of biological role, involved in oxygen transport from the lung to the various peripheral tissues. This chain is Hemoglobin subunit alpha-A (HBAA), found in Sphenodon punctatus (Tuatara).